The sequence spans 210 residues: MERQARGLLETQSLHEADEDMVTDVDFTSMISEEEKEELKAELAKLEDEISTLRQVLAAKEKHLIEIKQKLGMSLMNELKQNFSKSWHDMQTTSAYKKTHETLSHAGQKATAAISNVGTAISKKFGDMRSHSISYSIRHSISMPAMRNSPTFKSFEEKVETTVTSLKTKVGGTSHTGGSFEEVLSSTAHASAQSSLAGTRLPESEEELQC.

A coiled-coil region spans residues 22 to 73; sequence VTDVDFTSMISEEEKEELKAELAKLEDEISTLRQVLAAKEKHLIEIKQKLGM. Residues 185–197 show a composition bias toward polar residues; the sequence is SSTAHASAQSSLA. A disordered region spans residues 185–210; it reads SSTAHASAQSSLAGTRLPESEEELQC.

It belongs to the TPD52 family. In terms of assembly, forms a homodimer or heterodimer with other members of the family.

The sequence is that of Tumor protein D53 homolog (TPD52L1) from Gallus gallus (Chicken).